The primary structure comprises 161 residues: Cytochrome c-type biogenesis protein CcmE (161 aa).

Topologically, residues 1-8 (MNPVRKKR) are cytoplasmic. The helical; Signal-anchor for type II membrane protein transmembrane segment at 9 to 29 (LYIVLAILCGVSIAVALALTA) threads the bilayer. Residues 30–161 (LQENINLFYT…AKGYQQESAQ (132 aa)) lie on the Periplasmic side of the membrane. Residues H124 and Y128 each coordinate heme.

Belongs to the CcmE/CycJ family.

Its subcellular location is the cell inner membrane. Its function is as follows. Heme chaperone required for the biogenesis of c-type cytochromes. Transiently binds heme delivered by CcmC and transfers the heme to apo-cytochromes in a process facilitated by CcmF and CcmH. The polypeptide is Cytochrome c-type biogenesis protein CcmE (Ectopseudomonas mendocina (strain ymp) (Pseudomonas mendocina)).